A 613-amino-acid chain; its full sequence is RUN domain-containing protein 1 (613 aa).

Residues Ala-15–Glu-36 form a disordered region. Thr-54 is subject to Phosphothreonine. The segment covering Leu-57–Pro-69 has biased composition (low complexity). Disordered regions lie at residues Leu-57 to Thr-79, Tyr-140 to Thr-177, and Gly-305 to Asp-330. Residues Ser-71 and Ser-75 each carry the phosphoserine modification. Residues Pro-159–Thr-177 are compositionally biased toward basic and acidic residues. Residues Trp-160–Glu-235 adopt a coiled-coil conformation. Over residues Asn-309–Lys-325 the composition is skewed to polar residues. Residues Glu-421 to Ala-602 enclose the RUN domain. At Ser-497 the chain carries Phosphoserine.

Its function is as follows. May play a role as p53/TP53 inhibitor and thus may have oncogenic activity. The chain is RUN domain-containing protein 1 (RUNDC1) from Homo sapiens (Human).